Consider the following 122-residue polypeptide: Proximal tubules-expressed gene protein (122 aa).

The helical transmembrane segment at 33-53 (WLTGLIAMTVFLFLVLVVYVA) threads the bilayer.

The protein belongs to the PDZK1-interacting protein 1/SMIM24 family. In terms of tissue distribution, expressed in prospective pronephric mesoderm at the late gastrula stage. After neurulation, expressed in the intermediate mesoderm, eye placode and blood islands. Expression becomes restricted to the pronephric proximal tubule during embryogenesis, but is absent from the connecting tubules.

It is found in the membrane. In terms of biological role, essential for pronephric tubule development, acting upstream of pax8 and lhx1/lim1 and downstream of retinoic acid signaling to induce pronephric mesoderm to form pronephric tubule-specific cells. The protein is Proximal tubules-expressed gene protein (pteg) of Xenopus laevis (African clawed frog).